A 207-amino-acid polypeptide reads, in one-letter code: Dephospho-CoA kinase (207 aa).

A DPCK domain is found at 4–203 (VIGLTGGIAS…EEGYIEKPNY (200 aa)). 12-17 (ASGKST) contacts ATP.

The protein belongs to the CoaE family.

It is found in the cytoplasm. The enzyme catalyses 3'-dephospho-CoA + ATP = ADP + CoA + H(+). It functions in the pathway cofactor biosynthesis; coenzyme A biosynthesis; CoA from (R)-pantothenate: step 5/5. Its function is as follows. Catalyzes the phosphorylation of the 3'-hydroxyl group of dephosphocoenzyme A to form coenzyme A. This is Dephospho-CoA kinase from Staphylococcus aureus (strain MRSA252).